A 61-amino-acid polypeptide reads, in one-letter code: 14-3-3-like protein (61 aa).

It belongs to the 14-3-3 family.

This Zea mays (Maize) protein is 14-3-3-like protein.